We begin with the raw amino-acid sequence, 243 residues long: Ribonuclease PH (243 aa).

Residues R84 and 122 to 124 (GTR) contribute to the phosphate site.

The protein belongs to the RNase PH family. As to quaternary structure, homohexameric ring arranged as a trimer of dimers.

The enzyme catalyses tRNA(n+1) + phosphate = tRNA(n) + a ribonucleoside 5'-diphosphate. Its function is as follows. Phosphorolytic 3'-5' exoribonuclease that plays an important role in tRNA 3'-end maturation. Removes nucleotide residues following the 3'-CCA terminus of tRNAs; can also add nucleotides to the ends of RNA molecules by using nucleoside diphosphates as substrates, but this may not be physiologically important. Probably plays a role in initiation of 16S rRNA degradation (leading to ribosome degradation) during starvation. This Bdellovibrio bacteriovorus (strain ATCC 15356 / DSM 50701 / NCIMB 9529 / HD100) protein is Ribonuclease PH.